Reading from the N-terminus, the 326-residue chain is Ribose operon repressor (326 aa).

The HTH lacI-type domain occupies 1–56 (MATIKDVAGAAGVSVATVSRNLNDNGYVHEETRTRVIAAMAKLNYYPNEVARSLYK). The segment at residues 4–23 (IKDVAGAAGVSVATVSRNLN) is a DNA-binding region (H-T-H motif).

Transcriptional repressor for the ribose rbsDACBK operon. The polypeptide is Ribose operon repressor (rbsR) (Bacillus subtilis (strain 168)).